The sequence spans 307 residues: Nitric oxide synthase-interacting protein homolog (307 aa).

The segment at 120–159 is disordered; it reads PAMTPAHSSAAASEKPSTSSAAAAASSESSSASSISNMTN. A compositionally biased stretch (low complexity) spans 127–155; sequence SSAAASEKPSTSSAAAAASSESSSASSIS.

It belongs to the NOSIP family.

It localises to the cytoplasm. It is found in the nucleus. In terms of biological role, negatively regulates nitric oxide production by inducing nitric oxide synthase translocation to actin cytoskeleton and inhibiting its enzymatic activity. The sequence is that of Nitric oxide synthase-interacting protein homolog from Drosophila melanogaster (Fruit fly).